We begin with the raw amino-acid sequence, 746 residues long: NAD(P)H-quinone oxidoreductase subunit 5, chloroplastic (746 aa).

The next 16 helical transmembrane spans lie at 9 to 29 (WIIP…LLLF), 40 to 60 (WAFP…DLSI), 89 to 109 (IDSL…LVLI), 121 to 140 (YLRF…GLVT), 147 to 167 (VYIF…FWFT), 185 to 205 (GDFG…SLEF), 219 to 239 (NEVN…GSVA), 258 to 278 (TPIS…FLVA), 280 to 300 (LLPL…IGII), 327 to 347 (LGYM…FHLI), 354 to 374 (ALLF…VGYS), 396 to 416 (MSFL…CFWS), 425 to 445 (WLYS…TAFY), 552 to 572 (LFSM…GISF), 606 to 626 (FFIN…IASF), and 726 to 746 (SYIF…YLFP).

It belongs to the complex I subunit 5 family. In terms of assembly, NDH is composed of at least 16 different subunits, 5 of which are encoded in the nucleus.

It is found in the plastid. The protein resides in the chloroplast thylakoid membrane. The catalysed reaction is a plastoquinone + NADH + (n+1) H(+)(in) = a plastoquinol + NAD(+) + n H(+)(out). The enzyme catalyses a plastoquinone + NADPH + (n+1) H(+)(in) = a plastoquinol + NADP(+) + n H(+)(out). Functionally, NDH shuttles electrons from NAD(P)H:plastoquinone, via FMN and iron-sulfur (Fe-S) centers, to quinones in the photosynthetic chain and possibly in a chloroplast respiratory chain. The immediate electron acceptor for the enzyme in this species is believed to be plastoquinone. Couples the redox reaction to proton translocation, and thus conserves the redox energy in a proton gradient. The sequence is that of NAD(P)H-quinone oxidoreductase subunit 5, chloroplastic (ndhF) from Vicia faba (Broad bean).